Here is a 100-residue protein sequence, read N- to C-terminus: Small ribosomal subunit protein uS14c (100 aa).

This sequence belongs to the universal ribosomal protein uS14 family. In terms of assembly, part of the 30S ribosomal subunit.

The protein resides in the plastid. The protein localises to the chloroplast. Binds 16S rRNA, required for the assembly of 30S particles. The polypeptide is Small ribosomal subunit protein uS14c (Pisum sativum (Garden pea)).